The chain runs to 169 residues: Peptide deformylase (169 aa).

Fe cation-binding residues include Cys-91 and His-133. Glu-134 is an active-site residue. Residue His-137 participates in Fe cation binding.

Belongs to the polypeptide deformylase family. Fe(2+) serves as cofactor.

It catalyses the reaction N-terminal N-formyl-L-methionyl-[peptide] + H2O = N-terminal L-methionyl-[peptide] + formate. Removes the formyl group from the N-terminal Met of newly synthesized proteins. Requires at least a dipeptide for an efficient rate of reaction. N-terminal L-methionine is a prerequisite for activity but the enzyme has broad specificity at other positions. In Pectobacterium atrosepticum (strain SCRI 1043 / ATCC BAA-672) (Erwinia carotovora subsp. atroseptica), this protein is Peptide deformylase.